We begin with the raw amino-acid sequence, 82 residues long: Translational regulator CsrA (82 aa).

It belongs to the CsrA/RsmA family. In terms of assembly, homodimer; the beta-strands of each monomer intercalate to form a hydrophobic core, while the alpha-helices form wings that extend away from the core.

The protein resides in the cytoplasm. A translational regulator that binds mRNA to regulate translation initiation and/or mRNA stability. Usually binds in the 5'-UTR at or near the Shine-Dalgarno sequence preventing ribosome-binding, thus repressing translation. Its main target seems to be the major flagellin gene, while its function is anatagonized by FliW. The polypeptide is Translational regulator CsrA (Geobacillus kaustophilus (strain HTA426)).